Reading from the N-terminus, the 86-residue chain is YcgL domain-containing protein XOO0428 (86 aa).

The YcgL domain occupies 1–83 (MHAYVYKSQR…PKTRVLAGEC (83 aa)).

The protein is YcgL domain-containing protein XOO0428 of Xanthomonas oryzae pv. oryzae (strain MAFF 311018).